A 423-amino-acid chain; its full sequence is WD repeat and SOCS box-containing protein 1 (423 aa).

The segment at 76–100 is disordered; the sequence is DRSSGAGPRRLSRQNSEGSLLPGEP. 5 WD repeats span residues 125 to 166, 169 to 209, 213 to 252, 255 to 294, and 310 to 347; these read SRCV…LLLN, DHTD…NMVK, GHQN…LIRK, GHHN…VLLE, and ANDR…KSPQ. Residues 373 to 423 enclose the SOCS box domain; the sequence is DGSVHFWASPRSIASLQHLCRMTLRRVMPTQQVYTLPIPFSMQDYLAYKTL.

In terms of assembly, component of a probable ECS E3 ubiquitin-protein ligase complex that contains the Elongin BC complex.

It functions in the pathway protein modification; protein ubiquitination. Probable substrate-recognition component of a SCF-like ECS (Elongin-Cullin-SOCS-box protein) E3 ubiquitin-protein ligase complex which mediates the ubiquitination and subsequent proteasomal degradation of target proteins. The protein is WD repeat and SOCS box-containing protein 1 (wsb1) of Danio rerio (Zebrafish).